Consider the following 159-residue polypeptide: RNA pyrophosphohydrolase (159 aa).

The Nudix hydrolase domain maps to 6–149; it reads GFRPNVGIIL…KREVYRRALK (144 aa). Residues 38–59 carry the Nudix box motif; it reads GGINPQETPEDALYRELNEEVG.

This sequence belongs to the Nudix hydrolase family. RppH subfamily. Requires a divalent metal cation as cofactor.

In terms of biological role, accelerates the degradation of transcripts by removing pyrophosphate from the 5'-end of triphosphorylated RNA, leading to a more labile monophosphorylated state that can stimulate subsequent ribonuclease cleavage. In Pseudomonas savastanoi pv. phaseolicola (strain 1448A / Race 6) (Pseudomonas syringae pv. phaseolicola (strain 1448A / Race 6)), this protein is RNA pyrophosphohydrolase.